Reading from the N-terminus, the 143-residue chain is Nucleoside diphosphate kinase (143 aa).

Residues Lys-11, Phe-59, Arg-87, Thr-93, Arg-104, and Asn-114 each contribute to the ATP site. His-117 acts as the Pros-phosphohistidine intermediate in catalysis.

Belongs to the NDK family. As to quaternary structure, homotetramer. The cofactor is Mg(2+).

The protein localises to the cytoplasm. It carries out the reaction a 2'-deoxyribonucleoside 5'-diphosphate + ATP = a 2'-deoxyribonucleoside 5'-triphosphate + ADP. The catalysed reaction is a ribonucleoside 5'-diphosphate + ATP = a ribonucleoside 5'-triphosphate + ADP. Major role in the synthesis of nucleoside triphosphates other than ATP. The ATP gamma phosphate is transferred to the NDP beta phosphate via a ping-pong mechanism, using a phosphorylated active-site intermediate. This Citrobacter koseri (strain ATCC BAA-895 / CDC 4225-83 / SGSC4696) protein is Nucleoside diphosphate kinase.